A 998-amino-acid chain; its full sequence is Bifunctional glutamine synthetase adenylyltransferase/adenylyl-removing enzyme (998 aa).

The interval 1 to 487 is adenylyl removase; the sequence is MVVTKPATQR…LHAKLFYQPL (487 aa). The tract at residues 492–998 is adenylyl transferase; the sequence is GPAGLEIRHG…KAVVRKVFGS (507 aa).

Belongs to the GlnE family. Mg(2+) serves as cofactor.

It carries out the reaction [glutamine synthetase]-O(4)-(5'-adenylyl)-L-tyrosine + phosphate = [glutamine synthetase]-L-tyrosine + ADP. The catalysed reaction is [glutamine synthetase]-L-tyrosine + ATP = [glutamine synthetase]-O(4)-(5'-adenylyl)-L-tyrosine + diphosphate. Functionally, involved in the regulation of glutamine synthetase GlnA, a key enzyme in the process to assimilate ammonia. When cellular nitrogen levels are high, the C-terminal adenylyl transferase (AT) inactivates GlnA by covalent transfer of an adenylyl group from ATP to specific tyrosine residue of GlnA, thus reducing its activity. Conversely, when nitrogen levels are low, the N-terminal adenylyl removase (AR) activates GlnA by removing the adenylyl group by phosphorolysis, increasing its activity. The regulatory region of GlnE binds the signal transduction protein PII (GlnB) which indicates the nitrogen status of the cell. This chain is Bifunctional glutamine synthetase adenylyltransferase/adenylyl-removing enzyme, found in Mycobacterium avium (strain 104).